Consider the following 106-residue polypeptide: Terpredoxin (106 aa).

The 105-residue stretch at 2–106 (PRVVFIDEQS…GLIVRVPLPA (105 aa)) folds into the 2Fe-2S ferredoxin-type domain. [2Fe-2S] cluster is bound by residues Cys-40, Cys-46, Cys-49, and Cys-87.

The protein belongs to the adrenodoxin/putidaredoxin family. [2Fe-2S] cluster is required as a cofactor.

Its function is as follows. The oxidation of alpha-terpineol by cytochrome p450-TERP requires the participation of a flavoprotein, terpredoxin reductase, and an iron-sulfur protein, terpredoxin, to mediate the transfer of electrons from NADH to P450 for oxygen activation. This Pseudomonas sp protein is Terpredoxin (terPB).